We begin with the raw amino-acid sequence, 387 residues long: 8-amino-7-oxononanoate synthase (387 aa).

Arginine 19 is a binding site for substrate. Position 106-107 (106-107 (GY)) interacts with pyridoxal 5'-phosphate. Position 131 (histidine 131) interacts with substrate. Positions 177, 205, and 234 each coordinate pyridoxal 5'-phosphate. Position 237 is an N6-(pyridoxal phosphate)lysine (lysine 237). Threonine 351 provides a ligand contact to substrate.

This sequence belongs to the class-II pyridoxal-phosphate-dependent aminotransferase family. BioF subfamily. Homodimer. It depends on pyridoxal 5'-phosphate as a cofactor.

It carries out the reaction 6-carboxyhexanoyl-[ACP] + L-alanine + H(+) = (8S)-8-amino-7-oxononanoate + holo-[ACP] + CO2. It participates in cofactor biosynthesis; biotin biosynthesis. In terms of biological role, catalyzes the decarboxylative condensation of pimeloyl-[acyl-carrier protein] and L-alanine to produce 8-amino-7-oxononanoate (AON), [acyl-carrier protein], and carbon dioxide. This chain is 8-amino-7-oxononanoate synthase, found in Methylococcus capsulatus (strain ATCC 33009 / NCIMB 11132 / Bath).